We begin with the raw amino-acid sequence, 512 residues long: Sorting nexin MVP1 (512 aa).

The disordered stretch occupies residues 1–24 (MDLEADPWRVNSEENGNNISGSVW). The segment covering 13–22 (EENGNNISGS) has biased composition (low complexity). A PX domain is found at 130 to 248 (AEDIVSVEEI…LTFLTVPTDL (119 aa)). 4 residues coordinate a 1,2-diacyl-sn-glycero-3-phospho-(1D-myo-inositol-3-phosphate): arginine 174, serine 176, lysine 200, and arginine 215.

This sequence belongs to the sorting nexin family.

The protein localises to the cytoplasm. Its subcellular location is the membrane. Its function is as follows. Required for vacuolar protein sorting. This chain is Sorting nexin MVP1 (MVP1), found in Kluyveromyces lactis (strain ATCC 8585 / CBS 2359 / DSM 70799 / NBRC 1267 / NRRL Y-1140 / WM37) (Yeast).